A 336-amino-acid chain; its full sequence is Holliday junction branch migration complex subunit RuvB (336 aa).

Residues 1–182 (MKERIVNLET…FGMSFRMQFY (182 aa)) are large ATPase domain (RuvB-L). Residues Leu21, Arg22, Gly63, Lys66, Thr67, Ser68, 129 to 131 (EDF), Arg172, Tyr182, and Arg219 contribute to the ATP site. A Mg(2+)-binding site is contributed by Thr67. Residues 183-253 (SPSELALIIK…ITLHALNELG (71 aa)) form a small ATPAse domain (RuvB-S) region. Positions 256–336 (ELGFDEADLA…IPTLKSQTLF (81 aa)) are head domain (RuvB-H). Positions 310 and 315 each coordinate DNA.

The protein belongs to the RuvB family. In terms of assembly, homohexamer. Forms an RuvA(8)-RuvB(12)-Holliday junction (HJ) complex. HJ DNA is sandwiched between 2 RuvA tetramers; dsDNA enters through RuvA and exits via RuvB. An RuvB hexamer assembles on each DNA strand where it exits the tetramer. Each RuvB hexamer is contacted by two RuvA subunits (via domain III) on 2 adjacent RuvB subunits; this complex drives branch migration. In the full resolvosome a probable DNA-RuvA(4)-RuvB(12)-RuvC(2) complex forms which resolves the HJ.

It is found in the cytoplasm. It catalyses the reaction ATP + H2O = ADP + phosphate + H(+). Functionally, the RuvA-RuvB-RuvC complex processes Holliday junction (HJ) DNA during genetic recombination and DNA repair, while the RuvA-RuvB complex plays an important role in the rescue of blocked DNA replication forks via replication fork reversal (RFR). RuvA specifically binds to HJ cruciform DNA, conferring on it an open structure. The RuvB hexamer acts as an ATP-dependent pump, pulling dsDNA into and through the RuvAB complex. RuvB forms 2 homohexamers on either side of HJ DNA bound by 1 or 2 RuvA tetramers; 4 subunits per hexamer contact DNA at a time. Coordinated motions by a converter formed by DNA-disengaged RuvB subunits stimulates ATP hydrolysis and nucleotide exchange. Immobilization of the converter enables RuvB to convert the ATP-contained energy into a lever motion, pulling 2 nucleotides of DNA out of the RuvA tetramer per ATP hydrolyzed, thus driving DNA branch migration. The RuvB motors rotate together with the DNA substrate, which together with the progressing nucleotide cycle form the mechanistic basis for DNA recombination by continuous HJ branch migration. Branch migration allows RuvC to scan DNA until it finds its consensus sequence, where it cleaves and resolves cruciform DNA. The polypeptide is Holliday junction branch migration complex subunit RuvB (Helicobacter pylori (strain HPAG1)).